A 402-amino-acid polypeptide reads, in one-letter code: Acetate kinase (402 aa).

Residue N10 participates in Mg(2+) binding. K17 is an ATP binding site. R89 contributes to the substrate binding site. D148 acts as the Proton donor/acceptor in catalysis. ATP is bound by residues 208–212 (HLGNG), 283–285 (DCR), and 334–338 (GIGEN). E389 contributes to the Mg(2+) binding site.

This sequence belongs to the acetokinase family. As to quaternary structure, homodimer. It depends on Mg(2+) as a cofactor. The cofactor is Mn(2+).

It is found in the cytoplasm. It catalyses the reaction acetate + ATP = acetyl phosphate + ADP. Its pathway is metabolic intermediate biosynthesis; acetyl-CoA biosynthesis; acetyl-CoA from acetate: step 1/2. Catalyzes the formation of acetyl phosphate from acetate and ATP. Can also catalyze the reverse reaction. This chain is Acetate kinase, found in Actinobacillus pleuropneumoniae serotype 7 (strain AP76).